The following is a 234-amino-acid chain: Phosphatidylcholine synthase (234 aa).

Over 1–3 (MKN) the chain is Cytoplasmic. The chain crosses the membrane as a helical span at residues 4–24 (INLILAWLVHIFTASGLIVGL). The Periplasmic segment spans residues 25–26 (YS). A helical transmembrane segment spans residues 27–47 (IISIVNGNYSLLLKLTVIGLI). Topologically, residues 48–75 (IDGIDGTMARKLKVKELIPEIDGTLLDN) are cytoplasmic. A helical transmembrane segment spans residues 76–96 (ITDYINYTFIPVIFFYLGEFI). The Periplasmic portion of the chain corresponds to 97–98 (EE). A helical transmembrane segment spans residues 99–116 (KYKVAICIGILLSSAYQF). Over 117 to 126 (SRTDAKTNDN) the chain is Cytoplasmic. The helical transmembrane segment at 127-147 (YFRGFPSLWNLFVILNIIFKM) threads the bilayer. Over 148–149 (EQ) the chain is Periplasmic. A helical membrane pass occupies residues 150 to 170 (ITNLITMSICIITSFIPIKFI). Residues 171-180 (YPSKTKELRK) lie on the Cytoplasmic side of the membrane. The chain crosses the membrane as a helical span at residues 181–201 (ITIPITIISCLIFVVSIFSEL). Topologically, residues 202–207 (STTALK) are periplasmic. The chain crosses the membrane as a helical span at residues 208–228 (MAKTVLILYFAYLTLASIYLT). At 229–234 (YKTRNR) the chain is on the cytoplasmic side.

Belongs to the CDP-alcohol phosphatidyltransferase class-I family. Mn(2+) serves as cofactor.

It localises to the cell inner membrane. The enzyme catalyses a CDP-1,2-diacyl-sn-glycerol + choline = a 1,2-diacyl-sn-glycero-3-phosphocholine + CMP + H(+). In terms of biological role, condenses choline with CDP-diglyceride to produce phosphatidylcholine and CMP. The sequence is that of Phosphatidylcholine synthase from Borreliella burgdorferi (strain ATCC 35210 / DSM 4680 / CIP 102532 / B31) (Borrelia burgdorferi).